A 181-amino-acid polypeptide reads, in one-letter code: Large ribosomal subunit protein uL6m (181 aa).

This sequence belongs to the universal ribosomal protein uL6 family.

It localises to the mitochondrion. This is Large ribosomal subunit protein uL6m (RPL6) from Acanthamoeba castellanii (Amoeba).